Reading from the N-terminus, the 176-residue chain is Nucleoside triphosphate/diphosphate phosphatase (176 aa).

Arg-23 (proton donor) is an active-site residue. Mg(2+) contacts are provided by Asn-87, Asp-103, Asp-105, Asp-107, Asp-120, and Glu-123.

The protein belongs to the Ntdp family. Mg(2+) is required as a cofactor.

It carries out the reaction a ribonucleoside 5'-triphosphate + H2O = a ribonucleoside 5'-diphosphate + phosphate + H(+). The catalysed reaction is a ribonucleoside 5'-diphosphate + H2O = a ribonucleoside 5'-phosphate + phosphate + H(+). Its function is as follows. Has nucleoside phosphatase activity towards nucleoside triphosphates and nucleoside diphosphates. This chain is Nucleoside triphosphate/diphosphate phosphatase, found in Bacillus mycoides (strain KBAB4) (Bacillus weihenstephanensis).